Reading from the N-terminus, the 299-residue chain is Recombination-associated protein RdgC (299 aa).

It belongs to the RdgC family.

The protein resides in the cytoplasm. Its subcellular location is the nucleoid. May be involved in recombination. The chain is Recombination-associated protein RdgC from Bordetella parapertussis (strain 12822 / ATCC BAA-587 / NCTC 13253).